Reading from the N-terminus, the 580-residue chain is Cis-3-hydroxy-L-proline dehydratase (580 aa).

Catalysis depends on Ser66, which acts as the Proton acceptor.

It belongs to the AcnX family. As to quaternary structure, monomer. The cofactor is Fe(3+).

The enzyme catalyses cis-3-hydroxy-L-proline = 1-pyrroline-2-carboxylate + H2O. Inhibited by Zn(2+), Cd(2+) and Hg(2+), but not by Co(2+), Ni(2+), Mn(2+), Sr(2+), Mg(2+), or Fe(3+). Inhibited by pyrrole-2-carboxylate and its derivative 2-thiophenecarboxylate, but not by trans-aconitate, fluorocitrate and oxalomalate, which are typical inhibitors of the aconitase enzymes. Catalyzes the dehydration of cis-3-hydroxy-L-proline (c3LHyp) to Delta(1)-pyrroline-2-carboxylate (Pyr2C). Also has activity with (2S,3S,4R)-3,4-dihydroxyproline as substrate, albeit at about 300-fold lower rate. No activity with L-proline, trans-4-hydroxy-L-proline (t4LHyp), cis-4-hydroxy-L-proline (c4LHyp), trans-3-hydroxy-L-proline (t3LHyp), D-proline, cis-4-hydroxy-D-proline (c4DHyp), trans-4-hydroxy-D-proline (t4DHyp) or L-serine as substrates. No hydro-lyase activity with citrate or cis-acotinate. Does not catalyze 2-epimerization of c3LHyp to trans-3-hydroxy-D-proline (t3DHyp). Involved in a degradation pathway that converts c3LHyp to L-proline, which would allow P.aeruginosa to grow on c3LHyp as a sole carbon source. The protein is Cis-3-hydroxy-L-proline dehydratase of Pseudomonas aeruginosa (strain ATCC 15692 / DSM 22644 / CIP 104116 / JCM 14847 / LMG 12228 / 1C / PRS 101 / PAO1).